The primary structure comprises 158 residues: MQGTLSVWLAKRGLVHRSLGFDYQGIETLQIKPEDWHSIAVILYVYGYNYLRSQCAYDVAPGGLLASVYHLTRIEYGVNQAEEVCIKVFTHRSNSRIPSVFWVWKSTDFQERESYDMLGITYDSHPRLKRILMPESWIGWPLRKDYIAPNFYEIQDAY.

This sequence belongs to the complex I 30 kDa subunit family. As to quaternary structure, NDH is composed of at least 16 different subunits, 5 of which are encoded in the nucleus.

The protein resides in the plastid. It localises to the chloroplast thylakoid membrane. It carries out the reaction a plastoquinone + NADH + (n+1) H(+)(in) = a plastoquinol + NAD(+) + n H(+)(out). It catalyses the reaction a plastoquinone + NADPH + (n+1) H(+)(in) = a plastoquinol + NADP(+) + n H(+)(out). Functionally, NDH shuttles electrons from NAD(P)H:plastoquinone, via FMN and iron-sulfur (Fe-S) centers, to quinones in the photosynthetic chain and possibly in a chloroplast respiratory chain. The immediate electron acceptor for the enzyme in this species is believed to be plastoquinone. Couples the redox reaction to proton translocation, and thus conserves the redox energy in a proton gradient. The sequence is that of NAD(P)H-quinone oxidoreductase subunit J, chloroplastic from Aethionema grandiflorum (Persian stone-cress).